A 148-amino-acid polypeptide reads, in one-letter code: Ubiquitin-conjugating enzyme E2 10 (148 aa).

The region spanning 1–147 (MASKRILKEL…ARSWTQKYAM (147 aa)) is the UBC core domain. Cys85 serves as the catalytic Glycyl thioester intermediate.

It belongs to the ubiquitin-conjugating enzyme family. As to quaternary structure, interacts with CHIP and the E3 ubiquitin ligase BB. Associates with the E3 ubiquitin ligase JMJ24. Ubiquitously expressed with the highest levels in rosette leaves, roots and petals.

The enzyme catalyses S-ubiquitinyl-[E1 ubiquitin-activating enzyme]-L-cysteine + [E2 ubiquitin-conjugating enzyme]-L-cysteine = [E1 ubiquitin-activating enzyme]-L-cysteine + S-ubiquitinyl-[E2 ubiquitin-conjugating enzyme]-L-cysteine.. The protein operates within protein modification; protein ubiquitination. In terms of biological role, accepts the ubiquitin from the E1 complex and catalyzes its covalent attachment to other proteins. Mediates the selective degradation of short-lived and abnormal proteins. In Arabidopsis thaliana (Mouse-ear cress), this protein is Ubiquitin-conjugating enzyme E2 10.